We begin with the raw amino-acid sequence, 257 residues long: DNA repair protein RecO (257 aa).

It belongs to the RecO family.

Functionally, involved in DNA repair and RecF pathway recombination. This is DNA repair protein RecO from Variovorax paradoxus (strain S110).